Here is a 470-residue protein sequence, read N- to C-terminus: Cysteine--tRNA ligase (470 aa).

Residue Cys-27 coordinates Zn(2+). The 'HIGH' region motif lies at 29–39; that stretch reads PTVYNFFHIGN. 3 residues coordinate Zn(2+): Cys-211, His-236, and Glu-240. The short motif at 268–272 is the 'KMSKS' region element; it reads KMSKS. An ATP-binding site is contributed by Lys-271.

This sequence belongs to the class-I aminoacyl-tRNA synthetase family. Monomer. The cofactor is Zn(2+).

The protein resides in the cytoplasm. The enzyme catalyses tRNA(Cys) + L-cysteine + ATP = L-cysteinyl-tRNA(Cys) + AMP + diphosphate. The sequence is that of Cysteine--tRNA ligase from Clostridium botulinum (strain Alaska E43 / Type E3).